The following is a 201-amino-acid chain: Kunitz type trypsin inhibitor 104 (201 aa).

Positions 1–24 (MSTRSLTIFILAHVWLLMATTSIA) are cleaved as a signal peptide. 3 disulfides stabilise this stretch: Cys63–Cys110, Cys161–Cys173, and Cys166–Cys169.

It belongs to the protease inhibitor I3 (leguminous Kunitz-type inhibitor) family. As to quaternary structure, interacts with CP.

The protein localises to the secreted. Its subcellular location is the extracellular space. It is found in the apoplast. Its function is as follows. Protease inhibitor involved in the control of mycorrhiza establishment and arbuscule development during root colonization by arbuscular mycorrhizal (AM) fungi (e.g. Rhizophagus irregularis). This chain is Kunitz type trypsin inhibitor 104, found in Medicago truncatula (Barrel medic).